Reading from the N-terminus, the 606-residue chain is Kelch-like protein 41 (606 aa).

Residue serine 3 is modified to Phosphoserine. In terms of domain architecture, BTB spans 33-100 (IDCTLKAGDK…LYSASIDLND (68 aa)). Positions 135–237 (CLAILRLGLL…TEKYFKDHVE (103 aa)) constitute a BACK domain. Kelch repeat units lie at residues 346–398 (QIYV…EVDD), 399–447 (KIYV…SHKG), 448–495 (MIYC…VHKG), 497–542 (IVIA…SLAG), and 544–599 (LYAI…TRLN).

In terms of assembly, interacts with NRAP. Interacts with LASP1. Part of a complex that contains CUL3, RBX1 and KLHL41. Ubiquitinated by E3 ubiquitin ligase complex formed by CUL3 and RBX1 and probably targeted for proteasome-independent degradation. Quinone-induced oxidative stress increases its ubiquitination. In terms of tissue distribution, sarcomeric muscle.

The protein localises to the cytoplasm. It localises to the cytoskeleton. It is found in the cell projection. The protein resides in the pseudopodium. Its subcellular location is the ruffle. The protein localises to the myofibril. It localises to the sarcomere. It is found in the m line. The protein resides in the sarcoplasmic reticulum membrane. Its subcellular location is the endoplasmic reticulum membrane. Involved in skeletal muscle development and differentiation. Regulates proliferation and differentiation of myoblasts and plays a role in myofibril assembly by promoting lateral fusion of adjacent thin fibrils into mature, wide myofibrils. Required for pseudopod elongation in transformed cells. The polypeptide is Kelch-like protein 41 (KLHL41) (Homo sapiens (Human)).